The chain runs to 256 residues: Ubiquinone/menaquinone biosynthesis C-methyltransferase UbiE (256 aa).

S-adenosyl-L-methionine is bound by residues Thr-79, Asp-100, and 128–129 (DA).

This sequence belongs to the class I-like SAM-binding methyltransferase superfamily. MenG/UbiE family.

The catalysed reaction is a 2-demethylmenaquinol + S-adenosyl-L-methionine = a menaquinol + S-adenosyl-L-homocysteine + H(+). It catalyses the reaction a 2-methoxy-6-(all-trans-polyprenyl)benzene-1,4-diol + S-adenosyl-L-methionine = a 5-methoxy-2-methyl-3-(all-trans-polyprenyl)benzene-1,4-diol + S-adenosyl-L-homocysteine + H(+). The protein operates within quinol/quinone metabolism; menaquinone biosynthesis; menaquinol from 1,4-dihydroxy-2-naphthoate: step 2/2. It functions in the pathway cofactor biosynthesis; ubiquinone biosynthesis. Its function is as follows. Methyltransferase required for the conversion of demethylmenaquinol (DMKH2) to menaquinol (MKH2) and the conversion of 2-polyprenyl-6-methoxy-1,4-benzoquinol (DDMQH2) to 2-polyprenyl-3-methyl-6-methoxy-1,4-benzoquinol (DMQH2). In Pseudomonas fluorescens (strain Pf0-1), this protein is Ubiquinone/menaquinone biosynthesis C-methyltransferase UbiE.